Reading from the N-terminus, the 439-residue chain is Glutamyl-tRNA reductase (439 aa).

Substrate is bound by residues 46-49 (TCNR), S111, 116-118 (EGE), and Q122. The Nucleophile role is filled by C47. Residue 191–196 (GTGAYA) coordinates NADP(+).

The protein belongs to the glutamyl-tRNA reductase family. As to quaternary structure, homodimer.

The catalysed reaction is (S)-4-amino-5-oxopentanoate + tRNA(Glu) + NADP(+) = L-glutamyl-tRNA(Glu) + NADPH + H(+). It functions in the pathway porphyrin-containing compound metabolism; protoporphyrin-IX biosynthesis; 5-aminolevulinate from L-glutamyl-tRNA(Glu): step 1/2. In terms of biological role, catalyzes the NADPH-dependent reduction of glutamyl-tRNA(Glu) to glutamate 1-semialdehyde (GSA). In Clavibacter michiganensis subsp. michiganensis (strain NCPPB 382), this protein is Glutamyl-tRNA reductase.